A 265-amino-acid chain; its full sequence is Apolipoprotein A-I (265 aa).

The N-terminal stretch at 1 to 18 is a signal peptide; sequence MKAVVLTLAVLFLTGSQA. 2 tandem repeats follow at residues 67–88 and 89–110. The interval 67-265 is 10 X approximate tandem repeats; that stretch reads LKLLDNWDSL…DEASKKLNAQ (199 aa). Position 109 is a methionine sulfoxide (Met109). One copy of the 3; half-length repeat lies at 111–121; sequence KDLQEVKQKVQ. 5 tandem repeats follow at residues 122–142, 144–165, 166–187, 188–209, and 210–230. The stretch at 231-241 is one 9; half-length repeat; it reads PALEDLRQGLL. Residues 242-265 form repeat 10; sequence PVLENLKVSILAAIDEASKKLNAQ.

Belongs to the apolipoprotein A1/A4/E family. As to quaternary structure, homodimer. Interacts with APOA1BP and CLU. Component of a sperm activating protein complex (SPAP), consisting of APOA1, an immunoglobulin heavy chain, an immunoglobulin light chain and albumin. Interacts with NDRG1. Interacts with SCGB3A2. Interacts with NAXE and YJEFN3. Post-translationally, glycosylated. Palmitoylated. In terms of processing, phosphorylation sites are present in the extracellular medium. In terms of tissue distribution, major protein of plasma HDL, also found in chylomicrons.

Its subcellular location is the secreted. Its function is as follows. Participates in the reverse transport of cholesterol from tissues to the liver for excretion by promoting cholesterol efflux from tissues and by acting as a cofactor for the lecithin cholesterol acyltransferase (LCAT). As part of the SPAP complex, activates spermatozoa motility. The sequence is that of Apolipoprotein A-I (APOA1) from Balaenoptera acutorostrata scammoni (North Pacific minke whale).